The primary structure comprises 122 residues: MSIQRKALGNKGEEEACKYIQNLGYNIMERNYRCKIGELDIIAWDPVGMLVFLEVRSRSGRAFGVPEESVNYRKQNKLRMLAQQFLLTKSEFAKISCRFDVIGVYFNKEGSVQEIKHIKNAL.

This sequence belongs to the UPF0102 family.

The sequence is that of UPF0102 protein Dred_2035 from Desulforamulus reducens (strain ATCC BAA-1160 / DSM 100696 / MI-1) (Desulfotomaculum reducens).